The chain runs to 234 residues: Large ribosomal subunit protein uL1 (234 aa).

This sequence belongs to the universal ribosomal protein uL1 family. In terms of assembly, part of the 50S ribosomal subunit.

In terms of biological role, binds directly to 23S rRNA. The L1 stalk is quite mobile in the ribosome, and is involved in E site tRNA release. Protein L1 is also a translational repressor protein, it controls the translation of the L11 operon by binding to its mRNA. In Serratia proteamaculans (strain 568), this protein is Large ribosomal subunit protein uL1.